Reading from the N-terminus, the 157-residue chain is Ribosomal RNA large subunit methyltransferase H (157 aa).

S-adenosyl-L-methionine is bound by residues Leu-73, Gly-105, and 124 to 129 (LSLMTF).

Belongs to the RNA methyltransferase RlmH family. In terms of assembly, homodimer.

It is found in the cytoplasm. It carries out the reaction pseudouridine(1915) in 23S rRNA + S-adenosyl-L-methionine = N(3)-methylpseudouridine(1915) in 23S rRNA + S-adenosyl-L-homocysteine + H(+). Specifically methylates the pseudouridine at position 1915 (m3Psi1915) in 23S rRNA. The protein is Ribosomal RNA large subunit methyltransferase H of Flavobacterium johnsoniae (strain ATCC 17061 / DSM 2064 / JCM 8514 / BCRC 14874 / CCUG 350202 / NBRC 14942 / NCIMB 11054 / UW101) (Cytophaga johnsonae).